A 267-amino-acid polypeptide reads, in one-letter code: MTEYNWNERHIITFPEETLALATKDLHVYYGAKEAIKGIDMQFEKHKITALIGPSGCGKSTYLRSLNRMNDTIDIARVTGEILYQGIDVNRKDMNVYEIRKHLGMVFQRPNPFAKSIYKNITFAHERAGVKDKKVLDEIVETSLKQAALWDQVKDDLHKSAFTLSGGQQQRLCIARAISVKPDILLMDEPASALDPIATMQLEETMFELKKNYTIIIVTHNMQQAARASDYTAFFYLGNLIEYDKTRNIFQNAQCQSTNDYVSGHFG.

The ABC transporter domain maps to 21–262; it reads LATKDLHVYY…AQCQSTNDYV (242 aa). 53 to 60 lines the ATP pocket; it reads GPSGCGKS.

It belongs to the ABC transporter superfamily. Phosphate importer (TC 3.A.1.7) family. As to quaternary structure, the complex is composed of two ATP-binding proteins (PstB), two transmembrane proteins (PstC and PstA) and a solute-binding protein (PstS).

Its subcellular location is the cell membrane. The enzyme catalyses phosphate(out) + ATP + H2O = ADP + 2 phosphate(in) + H(+). Its function is as follows. Part of the ABC transporter complex PstSACB involved in phosphate import. Responsible for energy coupling to the transport system. This Streptococcus pyogenes serotype M1 protein is Phosphate import ATP-binding protein PstB 2.